Here is a 500-residue protein sequence, read N- to C-terminus: Probable malate:quinone oxidoreductase (500 aa).

The protein belongs to the MQO family. FAD is required as a cofactor.

It catalyses the reaction (S)-malate + a quinone = a quinol + oxaloacetate. Its pathway is carbohydrate metabolism; tricarboxylic acid cycle; oxaloacetate from (S)-malate (quinone route): step 1/1. This Bacillus cereus (strain B4264) protein is Probable malate:quinone oxidoreductase.